The following is a 165-amino-acid chain: 2-C-methyl-D-erythritol 2,4-cyclodiphosphate synthase (165 aa).

A divalent metal cation-binding residues include D12 and H14. 4-CDP-2-C-methyl-D-erythritol 2-phosphate-binding positions include 12–14 (DVH) and 38–39 (HS). H46 serves as a coordination point for a divalent metal cation. Residues 60-62 (DIG), 65-69 (FPDTD), F143, and R146 contribute to the 4-CDP-2-C-methyl-D-erythritol 2-phosphate site.

It belongs to the IspF family. As to quaternary structure, homotrimer. Requires a divalent metal cation as cofactor.

It catalyses the reaction 4-CDP-2-C-methyl-D-erythritol 2-phosphate = 2-C-methyl-D-erythritol 2,4-cyclic diphosphate + CMP. It functions in the pathway isoprenoid biosynthesis; isopentenyl diphosphate biosynthesis via DXP pathway; isopentenyl diphosphate from 1-deoxy-D-xylulose 5-phosphate: step 4/6. Its function is as follows. Involved in the biosynthesis of isopentenyl diphosphate (IPP) and dimethylallyl diphosphate (DMAPP), two major building blocks of isoprenoid compounds. Catalyzes the conversion of 4-diphosphocytidyl-2-C-methyl-D-erythritol 2-phosphate (CDP-ME2P) to 2-C-methyl-D-erythritol 2,4-cyclodiphosphate (ME-CPP) with a corresponding release of cytidine 5-monophosphate (CMP). This is 2-C-methyl-D-erythritol 2,4-cyclodiphosphate synthase from Aromatoleum aromaticum (strain DSM 19018 / LMG 30748 / EbN1) (Azoarcus sp. (strain EbN1)).